Here is a 213-residue protein sequence, read N- to C-terminus: Ribonuclease HII (213 aa).

In terms of domain architecture, RNase H type-2 spans 1–206 (MICGVDEAGK…VSTLLAKKTQ (206 aa)). A divalent metal cation is bound by residues Asp6, Glu7, and Asp101.

It belongs to the RNase HII family. It depends on Mn(2+) as a cofactor. Mg(2+) serves as cofactor.

Its subcellular location is the cytoplasm. The enzyme catalyses Endonucleolytic cleavage to 5'-phosphomonoester.. Its function is as follows. Endonuclease that specifically degrades the RNA of RNA-DNA hybrids. This chain is Ribonuclease HII, found in Methanoregula boonei (strain DSM 21154 / JCM 14090 / 6A8).